The primary structure comprises 1358 residues: Phosphoinositide 3-kinase regulatory subunit 4 (1358 aa).

G2 is lipidated: N-myristoyl glycine. The Protein kinase domain occupies 26–324 (FEYDKSLGST…AFPEVFYTFL (299 aa)). ATP contacts are provided by residues 32–40 (LGSTRFFKV) and K53. The active-site Proton acceptor is D148. HEAT repeat units follow at residues 413–450 (ILLD…LVQE), 458–495 (IYPE…TALR), 572–610 (KAND…YVGW), and 612–648 (SSSI…LGLL). S808, S813, S853, and S865 each carry phosphoserine. Positions 875 to 899 (LPKTSDHEVVPTGKSPRSESSAGVC) are disordered. WD repeat units follow at residues 991 to 1030 (EHKS…GKTT), 1040 to 1079 (RIGG…LPKS), 1093 to 1134 (KEDG…NAWT), 1139 to 1178 (LKSG…PISS), 1182 to 1223 (PSRA…RRLT), and 1237 to 1278 (PSPH…RSYV). Positions 1307–1326 (KQKVGPSDDTPRRGPESLPV) are disordered. Basic and acidic residues predominate over residues 1315-1326 (DTPRRGPESLPV). T1316 is modified (phosphothreonine). A WD 7 repeat occupies 1327–1358 (GHHDIITDIATFQTTQGFIVTASRDGIVKVWK).

This sequence belongs to the protein kinase superfamily. Ser/Thr protein kinase family. Component of the PI3K (PI3KC3/PI3K-III/class III phosphatidylinositol 3-kinase) complex the core of which is composed of the catalytic subunit PIK3C3, the regulatory subunit PIK3R4 and BECN1 associating with additional regulatory/auxiliary subunits to form alternative complex forms. Alternative complex forms containing a fourth regulatory subunit in a mutually exclusive manner are PI3K complex I (PI3KC3-C1) containing ATG14, and PI3K complex II (PI3KC3-C2) containing UVRAG. PI3KC3-C1 displays a V-shaped architecture with PIK3R4 serving as a bridge between PIK3C3 and the ATG14:BECN1 subcomplex. Both, PI3KC3-C1 and PI3KC3-C2, can associate with further regulatory subunits, such as RUBCN, SH3GLB1/Bif-1, AMBRA1 and NRBF2. PI3KC3-C1 probably associates with PIK3CB. Interacts with RAB7A in the presence of PIK3C3/VPS34. Interacts with NRBF2. Interacts with ARMC3. Mn(2+) serves as cofactor. Myristoylated. Post-translationally, probably autophosphorylated.

Its subcellular location is the late endosome. It localises to the cytoplasmic vesicle. It is found in the autophagosome. The protein resides in the membrane. The enzyme catalyses L-seryl-[protein] + ATP = O-phospho-L-seryl-[protein] + ADP + H(+). The catalysed reaction is L-threonyl-[protein] + ATP = O-phospho-L-threonyl-[protein] + ADP + H(+). Its function is as follows. Regulatory subunit of the PI3K complex that mediates formation of phosphatidylinositol 3-phosphate; different complex forms are believed to play a role in multiple membrane trafficking pathways: PI3KC3-C1 is involved in initiation of autophagosomes and PI3KC3-C2 in maturation of autophagosomes and endocytosis. Involved in regulation of degradative endocytic trafficking and cytokinesis, probably in the context of PI3KC3-C2. This chain is Phosphoinositide 3-kinase regulatory subunit 4 (Pik3r4), found in Rattus norvegicus (Rat).